The chain runs to 273 residues: tRNA (guanine-N(7)-)-methyltransferase A (273 aa).

Positions 86, 109, 111, 142, 143, and 162 each coordinate S-adenosyl-L-methionine. D165 is an active-site residue. The alphaC helix stretch occupies residues 166 to 174 (PHFKKTKHK). Positions 240 and 242 each coordinate S-adenosyl-L-methionine. An alpha6 helix region spans residues 240 to 248 (TEEGKKVQR).

It belongs to the class I-like SAM-binding methyltransferase superfamily. TrmB family. As to quaternary structure, catalytic component of the METTL1-WDR4 complex, composed of mettl1 and wdr4.

Its subcellular location is the nucleus. It carries out the reaction guanosine(46) in tRNA + S-adenosyl-L-methionine = N(7)-methylguanosine(46) in tRNA + S-adenosyl-L-homocysteine. The enzyme catalyses a guanosine in mRNA + S-adenosyl-L-methionine = an N(7)-methylguanosine in mRNA + S-adenosyl-L-homocysteine. It catalyses the reaction a guanosine in miRNA + S-adenosyl-L-methionine = an N(7)-methylguanosine in miRNA + S-adenosyl-L-homocysteine. It functions in the pathway tRNA modification; N(7)-methylguanine-tRNA biosynthesis. Its function is as follows. Catalytic component of METTL1-WDR4 methyltransferase complex that mediates the formation of N(7)-methylguanine in a subset of RNA species, such as tRNAs, mRNAs and microRNAs (miRNAs). Catalyzes the formation of N(7)-methylguanine at position 46 (m7G46) in a large subset of tRNAs that contain the 5'-RAGGU-3' motif within the variable loop. M7G46 interacts with C13-G22 in the D-loop to stabilize tRNA tertiary structure and protect tRNAs from decay. Also acts as a methyltransferase for a subset of internal N(7)-methylguanine in mRNAs. Internal N(7)-methylguanine methylation of mRNAs in response to stress promotes their relocalization to stress granules, thereby suppressing their translation. Also methylates a specific subset of miRNAs. In Xenopus tropicalis (Western clawed frog), this protein is tRNA (guanine-N(7)-)-methyltransferase A (mettl1-A).